The chain runs to 377 residues: Probable purine permease 22 (377 aa).

The next 10 membrane-spanning stretches (helical) occupy residues 39-59, 71-91, 107-127, 128-148, 166-186, 202-222, 238-258, 283-303, 309-329, and 338-358; these read WLRV…ATVL, TYVV…FRFF, SPSF…VSAY, AYLS…LILA, FTPL…LLVV, VIGF…LSLI, VLDL…IGLF, TLAS…GLIF, FSNS…VIVF, and IFSI…HYLD.

It belongs to the purine permeases (TC 2.A.7.14) family.

The protein resides in the membrane. This Arabidopsis thaliana (Mouse-ear cress) protein is Probable purine permease 22 (PUP22).